Consider the following 899-residue polypeptide: Protein translocase subunit SecA (899 aa).

ATP contacts are provided by residues Gln-87, 105 to 109 (GEGKT), and Asp-516. Positions 884, 886, 895, and 896 each coordinate Zn(2+).

Belongs to the SecA family. In terms of assembly, monomer and homodimer. Part of the essential Sec protein translocation apparatus which comprises SecA, SecYEG and auxiliary proteins SecDF. Other proteins may also be involved. It depends on Zn(2+) as a cofactor.

It localises to the cell inner membrane. The protein localises to the cytoplasm. It catalyses the reaction ATP + H2O + cellular proteinSide 1 = ADP + phosphate + cellular proteinSide 2.. Part of the Sec protein translocase complex. Interacts with the SecYEG preprotein conducting channel. Has a central role in coupling the hydrolysis of ATP to the transfer of proteins into and across the cell membrane, serving as an ATP-driven molecular motor driving the stepwise translocation of polypeptide chains across the membrane. This is Protein translocase subunit SecA from Borrelia garinii subsp. bavariensis (strain ATCC BAA-2496 / DSM 23469 / PBi) (Borreliella bavariensis).